The sequence spans 1206 residues: DNA-directed RNA polymerase subunit beta' (1206 aa).

Residues C60, C62, C75, and C78 each contribute to the Zn(2+) site. Mg(2+) contacts are provided by D449, D451, and D453. Positions 818, 892, 899, and 902 each coordinate Zn(2+).

The protein belongs to the RNA polymerase beta' chain family. As to quaternary structure, the RNAP catalytic core consists of 2 alpha, 1 beta, 1 beta' and 1 omega subunit. When a sigma factor is associated with the core the holoenzyme is formed, which can initiate transcription. Mg(2+) is required as a cofactor. Requires Zn(2+) as cofactor.

The enzyme catalyses RNA(n) + a ribonucleoside 5'-triphosphate = RNA(n+1) + diphosphate. Its function is as follows. DNA-dependent RNA polymerase catalyzes the transcription of DNA into RNA using the four ribonucleoside triphosphates as substrates. In Shouchella clausii (strain KSM-K16) (Alkalihalobacillus clausii), this protein is DNA-directed RNA polymerase subunit beta'.